Reading from the N-terminus, the 477-residue chain is Zinc finger C3HC-type protein 1-like (477 aa).

A C3HC-type zinc finger spans residues 95–149 (CAKYGWCNIECDMLKCSSCNAYLCASLQPILDFSKYKQRCVELQEALRKAHEKFC). The disordered stretch occupies residues 287–392 (SLSAPGTPVS…SSSSDTSPRS (106 aa)). Positions 354–363 (SMGQGENTGL) are enriched in polar residues. Basic residues predominate over residues 370-379 (SPHRRAKRPR). Low complexity predominate over residues 382–392 (SSSSSDTSPRS).

Post-translationally, phosphorylated. May also be weakly phosphorylated on Tyr residues.

It localises to the nucleus. The protein localises to the nucleus envelope. Its function is as follows. Required for proper positioning of a substantial amount of TPR at the nuclear basket (NB) through interaction with TPR. This is Zinc finger C3HC-type protein 1-like (zc3hc1) from Xenopus laevis (African clawed frog).